The primary structure comprises 86 residues: UPF0297 protein LSL_1110 (86 aa).

It belongs to the UPF0297 family.

The chain is UPF0297 protein LSL_1110 from Ligilactobacillus salivarius (strain UCC118) (Lactobacillus salivarius).